Here is a 202-residue protein sequence, read N- to C-terminus: Small ribosomal subunit protein uS4c (202 aa).

The S4 RNA-binding domain maps to 90–153 (MRLDNVIFRL…KSEAIISKNI (64 aa)).

The protein belongs to the universal ribosomal protein uS4 family. In terms of assembly, part of the 30S ribosomal subunit. Contacts protein S5. The interaction surface between S4 and S5 is involved in control of translational fidelity.

The protein localises to the plastid. Its subcellular location is the chloroplast. One of the primary rRNA binding proteins, it binds directly to 16S rRNA where it nucleates assembly of the body of the 30S subunit. Its function is as follows. With S5 and S12 plays an important role in translational accuracy. The polypeptide is Small ribosomal subunit protein uS4c (rps4) (Cyathophorum bulbosum (Moss)).